A 113-amino-acid chain; its full sequence is Protein RALF-like 31 (113 aa).

The first 21 residues, 1 to 21, serve as a signal peptide directing secretion; it reads MFNSTALVIFAILFLLISADA. A propeptide spans 22–58 (removed in mature form); the sequence is FPIPSPNGEIDAMLIRNSIIGEDEDLMPTEISRRVLM. 2 disulfide bridges follow: C76-C86 and C98-C104.

The protein belongs to the plant rapid alkalinization factor (RALF) family. Post-translationally, proteolytically cleaved, probably by S1P, a subtilisin-like serine protease (subtilase).

The protein localises to the secreted. In terms of biological role, cell signaling peptide that may regulate plant stress, growth, and development. Mediates a rapid alkalinization of extracellular space by mediating a transient increase in the cytoplasmic Ca(2+) concentration leading to a calcium-dependent signaling events through a cell surface receptor and a concomitant activation of some intracellular mitogen-activated protein kinases. The chain is Protein RALF-like 31 (RALFL31) from Arabidopsis thaliana (Mouse-ear cress).